The sequence spans 220 residues: Deoxyribose-phosphate aldolase (220 aa).

The active-site Proton donor/acceptor is Asp89. Lys151 (schiff-base intermediate with acetaldehyde) is an active-site residue. Lys180 serves as the catalytic Proton donor/acceptor.

The protein belongs to the DeoC/FbaB aldolase family. DeoC type 1 subfamily.

The protein resides in the cytoplasm. The catalysed reaction is 2-deoxy-D-ribose 5-phosphate = D-glyceraldehyde 3-phosphate + acetaldehyde. It participates in carbohydrate degradation; 2-deoxy-D-ribose 1-phosphate degradation; D-glyceraldehyde 3-phosphate and acetaldehyde from 2-deoxy-alpha-D-ribose 1-phosphate: step 2/2. Catalyzes a reversible aldol reaction between acetaldehyde and D-glyceraldehyde 3-phosphate to generate 2-deoxy-D-ribose 5-phosphate. The chain is Deoxyribose-phosphate aldolase from Staphylococcus haemolyticus (strain JCSC1435).